The following is an 852-amino-acid chain: Lon protease homolog 2, peroxisomal (852 aa).

Serine 2 is subject to N-acetylserine. Residues 13–222 form the Lon N-terminal domain; sequence LPLLLTHEGV…MTIPLLVRQI (210 aa). An ATP-binding site is contributed by 375–382; the sequence is GPPGVGKT. Residues 651-837 enclose the Lon proteolytic domain; it reads LSQPGVAIGL…DEVLNAAFDG (187 aa). Residues serine 743 and lysine 786 contribute to the active site. A Microbody targeting signal motif is present at residues 850 to 852; the sequence is SKL.

This sequence belongs to the peptidase S16 family. In terms of assembly, interacts with PEX5. Interacts with TYSND1. May interact with enzymes involved in beta-oxidation of fatty acids, including ACOX1/AOX. As to expression, widely expressed, with high levels in the liver, kidney and pancreas.

It localises to the peroxisome matrix. It catalyses the reaction Hydrolysis of proteins in presence of ATP.. ATP-dependent serine protease that mediates the selective degradation of misfolded and unassembled polypeptides in the peroxisomal matrix. Necessary for type 2 peroxisome targeting signal (PTS2)-containing protein processing and facilitates peroxisome matrix protein import. May indirectly regulate peroxisomal fatty acid beta-oxidation through degradation of the self-processed forms of TYSND1. In Homo sapiens (Human), this protein is Lon protease homolog 2, peroxisomal.